The following is a 554-amino-acid chain: Putative acyl-coenzyme A synthetase (554 aa).

An AMP-binding site is contributed by 195-206 (LLYSSGTTGPPK).

It belongs to the ATP-dependent AMP-binding enzyme family.

The sequence is that of Putative acyl-coenzyme A synthetase from Emericella nidulans (strain FGSC A4 / ATCC 38163 / CBS 112.46 / NRRL 194 / M139) (Aspergillus nidulans).